The following is a 584-amino-acid chain: 65 kDa protein (584 aa).

The Toprim domain maps to 459–548; sequence YDLYIAESAI…TKKVENWLPP (90 aa).

In Zymomonas mobilis subsp. mobilis (strain ATCC 10988 / DSM 424 / LMG 404 / NCIMB 8938 / NRRL B-806 / ZM1), this protein is 65 kDa protein.